The sequence spans 164 residues: UPF0114 protein YqhA (164 aa).

The next 3 helical transmembrane spans lie at 15–35 (LLAPVYFGLSLALIALALKFF), 53–73 (LILVLLSLVDMTLVGGLLVMV), and 136–156 (LMWYVIIHLTFVLSAFVMGYL).

This sequence belongs to the UPF0114 family.

The protein resides in the cell membrane. The sequence is that of UPF0114 protein YqhA from Salmonella dublin (strain CT_02021853).